A 180-amino-acid chain; its full sequence is MEKFFNQFFENIGEDKNREGLKETPKRVQELWKFLYKGYKEDPRVALKSAYFQGVCDEMIVAQNIEFYSTCEHHLLPFFGNISVGYIPKEKIVGISAIAKLIEIYSKRLQIQERLTTQIAETFDEIIEPRGVIVVCEAKHLCMSMQGVQKQNAIIKTSVLRGLFKKDPKTRAEFMQLLKS.

Residues C71, H74, and C142 each coordinate Zn(2+).

It belongs to the GTP cyclohydrolase I family. In terms of assembly, toroid-shaped homodecamer, composed of two pentamers of five dimers.

It carries out the reaction GTP + H2O = 7,8-dihydroneopterin 3'-triphosphate + formate + H(+). It participates in cofactor biosynthesis; 7,8-dihydroneopterin triphosphate biosynthesis; 7,8-dihydroneopterin triphosphate from GTP: step 1/1. The protein is GTP cyclohydrolase 1 (folE) of Helicobacter pylori (strain J99 / ATCC 700824) (Campylobacter pylori J99).